A 142-amino-acid chain; its full sequence is Large ribosomal subunit protein uL13 (142 aa).

Belongs to the universal ribosomal protein uL13 family. Part of the 50S ribosomal subunit.

Its function is as follows. This protein is one of the early assembly proteins of the 50S ribosomal subunit, although it is not seen to bind rRNA by itself. It is important during the early stages of 50S assembly. This is Large ribosomal subunit protein uL13 from Polynucleobacter asymbioticus (strain DSM 18221 / CIP 109841 / QLW-P1DMWA-1) (Polynucleobacter necessarius subsp. asymbioticus).